We begin with the raw amino-acid sequence, 323 residues long: Cyclin-H (323 aa).

Position 5 is a phosphoserine; by CDK8 (Ser5). Residue Ser132 is modified to Phosphoserine. Residues 296 to 323 (GYEDDDYVSKKPKQEEEEWTDDDLVDAL) form a disordered region. Ser304 is subject to Phosphoserine; by CDK8. A compositionally biased stretch (acidic residues) spans 310 to 323 (EEEEWTDDDLVDAL). Thr315 carries the post-translational modification Phosphothreonine.

This sequence belongs to the cyclin family. Cyclin C subfamily. In terms of assembly, associates primarily with CDK7 and MAT1 to form the CAK complex. CAK can further associate with the core-TFIIH to form the TFIIH basal transcription factor.

It is found in the nucleus. Its function is as follows. Regulates CDK7, the catalytic subunit of the CDK-activating kinase (CAK) enzymatic complex. CAK activates the cyclin-associated kinases CDK1, CDK2, CDK4 and CDK6 by threonine phosphorylation. CAK complexed to the core-TFIIH basal transcription factor activates RNA polymerase II by serine phosphorylation of the repetitive C-terminal domain (CTD) of its large subunit (POLR2A), allowing its escape from the promoter and elongation of the transcripts. Involved in cell cycle control and in RNA transcription by RNA polymerase II. Its expression and activity are constant throughout the cell cycle. This Rattus norvegicus (Rat) protein is Cyclin-H (Ccnh).